The primary structure comprises 69 residues: DNA gyrase inhibitor YacG (69 aa).

Positions Met1–Arg15 are enriched in basic and acidic residues. Positions Met1–Glu22 are disordered. Positions 20, 23, 35, and 39 each coordinate Zn(2+).

It belongs to the DNA gyrase inhibitor YacG family. As to quaternary structure, interacts with GyrB. It depends on Zn(2+) as a cofactor.

Its function is as follows. Inhibits all the catalytic activities of DNA gyrase by preventing its interaction with DNA. Acts by binding directly to the C-terminal domain of GyrB, which probably disrupts DNA binding by the gyrase. The polypeptide is DNA gyrase inhibitor YacG (Allorhizobium ampelinum (strain ATCC BAA-846 / DSM 112012 / S4) (Agrobacterium vitis (strain S4))).